The following is a 347-amino-acid chain: A-type ATP synthase subunit C (347 aa).

It belongs to the V-ATPase V0D/AC39 subunit family. As to quaternary structure, has multiple subunits with at least A(3), B(3), C, D, E, F, H, I and proteolipid K(x).

Its subcellular location is the cell membrane. In terms of biological role, component of the A-type ATP synthase that produces ATP from ADP in the presence of a proton gradient across the membrane. The sequence is that of A-type ATP synthase subunit C from Haloquadratum walsbyi (strain DSM 16790 / HBSQ001).